The primary structure comprises 390 residues: UPF0229 protein Cbei_0567 (390 aa).

Residues 77-108 (SGVGNEKRGEKLGNGNKKLAKGNQGAGNEEGD) are disordered. Residues 89-103 (GNGNKKLAKGNQGAG) are compositionally biased toward low complexity.

Belongs to the UPF0229 family.

This Clostridium beijerinckii (strain ATCC 51743 / NCIMB 8052) (Clostridium acetobutylicum) protein is UPF0229 protein Cbei_0567.